The primary structure comprises 340 residues: Beta-D-galactofuranosidase xynD (340 aa).

The N-terminal stretch at 1-24 (MKHHNYYPSTCLSILPFLLPLTMS) is a signal peptide. Aspartate 51 acts as the Proton acceptor in catalysis. N-linked (GlcNAc...) asparagine glycans are attached at residues asparagine 96 and asparagine 165. The active-site Proton donor is the glutamate 222. N-linked (GlcNAc...) asparagine glycosylation is found at asparagine 302 and asparagine 328.

Belongs to the glycosyl hydrolase 43 family.

It is found in the secreted. It functions in the pathway glycan degradation. Glycoside hydrolase family 43 beta-D-galactofuranosidase involved in the degradation of beta-galactofuranoside (Galf)-containing glycans such as galactomannan or O-glycans. Is not active on beta-1,5- or beta-1,6-linked beta-D-galactofuranose (Galf) residues. The protein is Beta-D-galactofuranosidase xynD of Aspergillus niger (strain ATCC MYA-4892 / CBS 513.88 / FGSC A1513).